The following is a 177-amino-acid chain: SKP1-like protein 15 (177 aa).

The tract at residues isoleucine 108–glutamate 167 is interaction with the F-box domain of F-box proteins.

The protein belongs to the SKP1 family. As to quaternary structure, part of a SCF (SKP1-cullin-F-box) protein ligase complex. As to expression, expressed at low levels in seedlings and leaves.

It localises to the nucleus. It participates in protein modification; protein ubiquitination. Involved in ubiquitination and subsequent proteasomal degradation of target proteins. Together with CUL1, RBX1 and a F-box protein, it forms a SCF E3 ubiquitin ligase complex. The functional specificity of this complex depends on the type of F-box protein. In the SCF complex, it serves as an adapter that links the F-box protein to CUL1. This chain is SKP1-like protein 15 (ASK15), found in Arabidopsis thaliana (Mouse-ear cress).